Reading from the N-terminus, the 471-residue chain is Arginine biosynthesis bifunctional protein ArgJ, mitochondrial (471 aa).

Residues 1 to 33 (MAMAGCNGFFLHQLRQPRLQLARQLGRTPSRAY) constitute a mitochondrion transit peptide. The substrate site is built by T201, K230, T241, E327, N466, and T471. T241 acts as the Nucleophile in catalysis.

The protein belongs to the ArgJ family. Heterodimer of an alpha and a beta chain. The alpha and beta chains are autoproteolytically processed from a single precursor protein within the mitochondrion.

Its subcellular location is the mitochondrion matrix. The enzyme catalyses N(2)-acetyl-L-ornithine + L-glutamate = N-acetyl-L-glutamate + L-ornithine. The catalysed reaction is L-glutamate + acetyl-CoA = N-acetyl-L-glutamate + CoA + H(+). The protein operates within amino-acid biosynthesis; L-arginine biosynthesis; L-ornithine and N-acetyl-L-glutamate from L-glutamate and N(2)-acetyl-L-ornithine (cyclic): step 1/1. It participates in amino-acid biosynthesis; L-arginine biosynthesis; N(2)-acetyl-L-ornithine from L-glutamate: step 1/4. Functionally, catalyzes two activities which are involved in the cyclic version of arginine biosynthesis: the synthesis of acetylglutamate from glutamate and acetyl-CoA, and of ornithine by transacetylation between acetylornithine and glutamate. This Chaetomium globosum (strain ATCC 6205 / CBS 148.51 / DSM 1962 / NBRC 6347 / NRRL 1970) (Soil fungus) protein is Arginine biosynthesis bifunctional protein ArgJ, mitochondrial.